Reading from the N-terminus, the 262-residue chain is Hydroxyethylthiazole kinase (262 aa).

Methionine 39 serves as a coordination point for substrate. Positions 115 and 160 each coordinate ATP. Substrate is bound at residue glycine 187.

Belongs to the Thz kinase family. Mg(2+) is required as a cofactor.

It catalyses the reaction 5-(2-hydroxyethyl)-4-methylthiazole + ATP = 4-methyl-5-(2-phosphooxyethyl)-thiazole + ADP + H(+). The protein operates within cofactor biosynthesis; thiamine diphosphate biosynthesis; 4-methyl-5-(2-phosphoethyl)-thiazole from 5-(2-hydroxyethyl)-4-methylthiazole: step 1/1. In terms of biological role, catalyzes the phosphorylation of the hydroxyl group of 4-methyl-5-beta-hydroxyethylthiazole (THZ). In Staphylococcus epidermidis (strain ATCC 12228 / FDA PCI 1200), this protein is Hydroxyethylthiazole kinase.